Here is a 229-residue protein sequence, read N- to C-terminus: Ras-related protein Rab-33B (229 aa).

GTP is bound by residues Asn43, Val44, Gly45, Lys46, Thr47, Cys48, Thr62, and Thr65. Thr47 lines the Mg(2+) pocket. The short motif at Gly56–Val68 is the Switch 1 element. Mg(2+) contacts are provided by Thr65 and Asp88. The Switch 2 signature appears at Thr89–His108. 6 residues coordinate GTP: Gly91, Asn148, Lys149, Asp151, Ala179, and Lys180. S-geranylgeranyl cysteine attachment occurs at residues Cys227 and Cys229. Cys229 bears the Cysteine methyl ester mark.

Belongs to the small GTPase superfamily. Rab family. In terms of assembly, interacts (GTP- and GDP-bound forms) with ATG16L1; the complex consists of a tetramer where two RAB33B molecules bind independently one molecule of the ATG16L1 homodimer; the interaction promotes ATG12-ATG5-ATG16L1 complex recruitment to phagophores. Interacts with ATG16L2; however interaction is approximately hundred times lower than for ATG16L1. Interacts with RIC1 (via C-terminus domain); the interaction is direct with a preference for RAB33B-GTP. Interacts with RGP1. Requires Mg(2+) as cofactor. Prenylated.

The protein resides in the golgi apparatus membrane. The protein localises to the golgi apparatus. Its subcellular location is the cis-Golgi network. It localises to the preautophagosomal structure membrane. The enzyme catalyses GTP + H2O = GDP + phosphate + H(+). Regulated by guanine nucleotide exchange factors (GEFs) which promote the exchange of bound GDP for free GTP. Regulated by GTPase activating proteins (GAPs) such as SGSM2 which increase the GTP hydrolysis activity. Inhibited by GDP dissociation inhibitors (GDIs). In terms of biological role, the small GTPases Rab are key regulators of intracellular membrane trafficking, from the formation of transport vesicles to their fusion with membranes. Rabs cycle between an inactive GDP-bound form and an active GTP-bound form that is able to recruit to membranes different sets of downstream effectors directly responsible for vesicle formation, movement, tethering and fusion. RAB33B acts, in coordination with RAB6A, to regulate intra-Golgi retrograde trafficking. Participates in autophagosome formation by recruiting the ATG12-ATG5-ATG16L1 complex to phagophores, probably in a nucleotide-independent manner. In Homo sapiens (Human), this protein is Ras-related protein Rab-33B.